Reading from the N-terminus, the 863-residue chain is MICAL-like protein 1 (863 aa).

The 107-residue stretch at 2–108 folds into the Calponin-homology (CH) domain; sequence AGPRGALLAW…YVSQYYNHFC (107 aa). 2 disordered regions span residues 119–162 and 224–670; these read RKGL…TPSS and GTRS…PLIK. Residues 125–135 are compositionally biased toward pro residues; the sequence is CSPPSVAPTPV. Composition is skewed to low complexity over residues 143 to 159 and 224 to 244; these read GEELSSGSLSEQGTGQT and GTRSGTRPGPFSQPKQQHQQQ. The region spanning 162–225 is the LIM zinc-binding domain; sequence STCAACQQHV…EHCARLGPGT (64 aa). Phosphoserine occurs at positions 295 and 309. The residue at position 318 (T318) is a Phosphothreonine. Over residues 325–340 the composition is skewed to polar residues; that stretch reads LQQENLVEQAGSSSLV. The span at 384 to 395 shows a compositional bias: pro residues; the sequence is APLPPSSSPGPP. S391 bears the Phosphoserine mark. The NPF1 signature appears at 425 to 427; that stretch reads NPF. A compositionally biased stretch (acidic residues) spans 427-438; it reads FEEEEEDKEEEA. Residues 439–450 show a composition bias toward low complexity; the sequence is PAAPSLATSPAL. 2 positions are modified to phosphothreonine: T467 and T469. A phosphoserine mark is found at S470, S471, S484, and S486. Composition is skewed to low complexity over residues 482-495, 505-520, and 553-566; these read APSASPLALHASRL, PSPALSVESLSSESAS, and SLSTNSSLASSGEL. Phosphoserine occurs at positions 578 and 621. The NPF2 motif lies at 633-635; the sequence is NPF. A compositionally biased stretch (low complexity) spans 638–656; the sequence is KPSPAASPATKKATKGSKP. Residues 652–863 are mediates the interaction with RAB13 and RAB35 and intramolecular interaction with the CH domain; sequence KGSKPVRPPA…AKSKSPRDKS (212 aa). The 148-residue stretch at 671 to 818 folds into the bMERB domain; the sequence is RKVQADQYIP…EEEEDKMLEA (148 aa). A coiled-coil region spans residues 682–711; it reads EDIHGEMDTIERRLDALEHRGVLLEEKLRG. A necessary and sufficient to associate with tubular recycling endosome membranes, mediate phosphatidic acid-binding and membrane tubulation region spans residues 700-863; sequence HRGVLLEEKL…AKSKSPRDKS (164 aa). S740 carries the post-translational modification Phosphoserine. Positions 785–830 form a coiled coil; it reads MQELVTLIEQRNAIINCLDEDRQREEEEDKMLEAMIKKKEFQREAE.

Homooligomer. Interacts (via NPF1 motif) with EHD1 (via EH domain); the interaction is direct and probably recruits EHD1 to membranes. Interacts with EHD3 (via EH domain). Interacts with RAB35 (GTP-bound form); the interaction is direct and probably recruits MICALL1 to membranes. Interacts with ACAP2; the interaction is indirect through RAB35. Interacts with RAB8A (GTP-bound form); regulates RAB8A association with recycling endosomes. Interacts with RAB13 (GTP-bound form). Interacts with ARF6 (GTP-bound form). Interacts with PACSIN2 (via the SH3 domain). Interacts with DPYSL2.

The protein resides in the recycling endosome membrane. The protein localises to the late endosome membrane. Its subcellular location is the cell projection. It is found in the cilium membrane. It localises to the cytoplasm. The protein resides in the cytoskeleton. The protein localises to the microtubule organizing center. Its subcellular location is the centrosome. It is found in the centriole. In terms of biological role, lipid-binding protein with higher affinity for phosphatidic acid, a lipid enriched in recycling endosome membranes. On endosome membranes, acts as a downstream effector of Rab proteins recruiting cytosolic proteins to regulate membrane tubulation. Involved in a late step of receptor-mediated endocytosis regulating for instance endocytosed-EGF receptor trafficking. Alternatively, regulates slow endocytic recycling of endocytosed proteins back to the plasma membrane. Also involved in cargo protein delivery to the plasma membrane. Plays a role in ciliogenesis coordination, recruits EHD1 to primary cilium where it is anchored to the centriole through interaction with tubulins. May indirectly play a role in neurite outgrowth. This Homo sapiens (Human) protein is MICAL-like protein 1 (MICALL1).